The chain runs to 291 residues: ATP phosphoribosyltransferase (291 aa).

This sequence belongs to the ATP phosphoribosyltransferase family. Long subfamily. Mg(2+) is required as a cofactor.

The protein localises to the cytoplasm. The catalysed reaction is 1-(5-phospho-beta-D-ribosyl)-ATP + diphosphate = 5-phospho-alpha-D-ribose 1-diphosphate + ATP. The protein operates within amino-acid biosynthesis; L-histidine biosynthesis; L-histidine from 5-phospho-alpha-D-ribose 1-diphosphate: step 1/9. With respect to regulation, feedback inhibited by histidine. Functionally, catalyzes the condensation of ATP and 5-phosphoribose 1-diphosphate to form N'-(5'-phosphoribosyl)-ATP (PR-ATP). Has a crucial role in the pathway because the rate of histidine biosynthesis seems to be controlled primarily by regulation of HisG enzymatic activity. The chain is ATP phosphoribosyltransferase from Geotalea uraniireducens (strain Rf4) (Geobacter uraniireducens).